A 1180-amino-acid polypeptide reads, in one-letter code: DNA-directed RNA polymerase subunit beta (1180 aa).

It belongs to the RNA polymerase beta chain family. The RNAP catalytic core consists of 2 alpha, 1 beta, 1 beta' and 1 omega subunit. When a sigma factor is associated with the core the holoenzyme is formed, which can initiate transcription.

The catalysed reaction is RNA(n) + a ribonucleoside 5'-triphosphate = RNA(n+1) + diphosphate. DNA-dependent RNA polymerase catalyzes the transcription of DNA into RNA using the four ribonucleoside triphosphates as substrates. This chain is DNA-directed RNA polymerase subunit beta, found in Macrococcus caseolyticus (strain JCSC5402) (Macrococcoides caseolyticum).